The primary structure comprises 885 residues: Envelope glycoprotein B (885 aa).

The signal sequence occupies residues 1–34 (MRPRGTPPSFLPLPVLLALAVIAAAGRAAPAAAA). Positions 29 to 46 (APAAAAAPTADPAATPAL) are enriched in low complexity. The tract at residues 29-74 (APAAAAAPTADPAATPALPEDEEVPDEDGEGVATPAPAANASVEAG) is disordered. Residues 35-759 (APTADPAATP…SGVSSFLSNP (725 aa)) lie on the Virion surface side of the membrane. Residues 47–58 (PEDEEVPDEDGE) are compositionally biased toward acidic residues. N-linked (GlcNAc...) asparagine; by host glycans are attached at residues Asn68 and Asn122. 5 disulfides stabilise this stretch: Cys97/Cys558, Cys114/Cys514, Cys188/Cys252, Cys345/Cys393, and Cys581/Cys618. Involved in fusion and/or binding to host membrane regions lie at residues 154 to 160 (VWFGHRY) and 239 to 246 (RVEAFHRY). N-linked (GlcNAc...) asparagine; by host glycans are attached at residues Asn379 and Asn411. The interval 455 to 478 (RRPAGGDPGEAATPGPSVDPPSVE) is disordered. The N-linked (GlcNAc...) asparagine; by host glycan is linked to Asn659. Hydrophobic membrane proximal region regions lie at residues 704–757 (IDTV…SFLS) and 716–756 (LFAG…SSFL). Residues 760–780 (FGALAVGLLVLAGLAAAFFAF) form a helical membrane-spanning segment. Topologically, residues 781–885 (RYVMRLQRNP…PLRDTDEEEL (105 aa)) are intravirion. A Golgi targeting motif is present at residues 834–837 (YMAL). Residues 866–885 (MRKRARPRYSPLRDTDEEEL) are disordered. The Internalization motif motif lies at 874 to 877 (YSPL).

The protein belongs to the herpesviridae glycoprotein B family. In terms of assembly, homotrimer; disulfide-linked. Binds to heparan sulfate proteoglycans. Interacts with gH/gL heterodimer.

It is found in the virion membrane. It localises to the host cell membrane. The protein localises to the host endosome membrane. Its subcellular location is the host Golgi apparatus membrane. Functionally, envelope glycoprotein that forms spikes at the surface of virion envelope. Essential for the initial attachment to heparan sulfate moieties of the host cell surface proteoglycans. Involved in fusion of viral and cellular membranes leading to virus entry into the host cell. Following initial binding to its host receptors, membrane fusion is mediated by the fusion machinery composed at least of gB and the heterodimer gH/gL. May be involved in the fusion between the virion envelope and the outer nuclear membrane during virion egress. In Herpes simplex virus type 2 (strain SA8) (Simian agent 8), this protein is Envelope glycoprotein B.